A 1295-amino-acid chain; its full sequence is Phosphoribosylformylglycinamidine synthase (1295 aa).

The segment at 305–327 is disordered; sequence WPGAATGSGGEIRDEGATGRGAK. ATP contacts are provided by residues 307–318 and Ala678; that span reads GAATGSGGEIRD. The Mg(2+) site is built by Glu718, Asn722, and Asp884. Ser886 lines the ATP pocket. One can recognise a Glutamine amidotransferase type-1 domain in the interval 1042 to 1295; it reads VAVLREQGVN…IFRNARKQLG (254 aa). Catalysis depends on Cys1135, which acts as the Nucleophile. Catalysis depends on residues His1260 and Glu1262.

In the N-terminal section; belongs to the FGAMS family. In terms of assembly, monomer.

Its subcellular location is the cytoplasm. The catalysed reaction is N(2)-formyl-N(1)-(5-phospho-beta-D-ribosyl)glycinamide + L-glutamine + ATP + H2O = 2-formamido-N(1)-(5-O-phospho-beta-D-ribosyl)acetamidine + L-glutamate + ADP + phosphate + H(+). It functions in the pathway purine metabolism; IMP biosynthesis via de novo pathway; 5-amino-1-(5-phospho-D-ribosyl)imidazole from N(2)-formyl-N(1)-(5-phospho-D-ribosyl)glycinamide: step 1/2. In terms of biological role, phosphoribosylformylglycinamidine synthase involved in the purines biosynthetic pathway. Catalyzes the ATP-dependent conversion of formylglycinamide ribonucleotide (FGAR) and glutamine to yield formylglycinamidine ribonucleotide (FGAM) and glutamate. This is Phosphoribosylformylglycinamidine synthase from Shigella sonnei (strain Ss046).